Reading from the N-terminus, the 247-residue chain is Calpain small subunit 2 (247 aa).

Ca(2+)-binding residues include alanine 88, aspartate 91, glutamate 93, aspartate 131, aspartate 133, threonine 135, lysine 137, glutamate 142, aspartate 161, aspartate 163, serine 165, and aspartate 204. EF-hand domains lie at 118 to 151 (FSLD…NNIK), 148 to 183 (NNIK…AGFQ), 184 to 212 (LNEQ…ISCL), and 213 to 247 (VRLD…TMYS).

As to quaternary structure, heterodimer of a large (catalytic) and a small (regulatory) subunit.

It is found in the cytoplasm. Its subcellular location is the cell membrane. Its function is as follows. Calcium-regulated non-lysosomal thiol-protease which catalyzes limited proteolysis of substrates involved in cytoskeletal remodeling and signal transduction. This small subunit may act as a tissue-specific chaperone of the large subunit, possibly by helping it fold into its correct conformation for activity. This is Calpain small subunit 2 (Capns2) from Mus musculus (Mouse).